Here is a 192-residue protein sequence, read N- to C-terminus: Ribose 1,5-bisphosphate phosphokinase PhnN (192 aa).

15-22 is an ATP binding site; the sequence is GPSGAGKD.

The protein belongs to the ribose 1,5-bisphosphokinase family.

The catalysed reaction is alpha-D-ribose 1,5-bisphosphate + ATP = 5-phospho-alpha-D-ribose 1-diphosphate + ADP. It functions in the pathway metabolic intermediate biosynthesis; 5-phospho-alpha-D-ribose 1-diphosphate biosynthesis; 5-phospho-alpha-D-ribose 1-diphosphate from D-ribose 5-phosphate (route II): step 3/3. Its function is as follows. Catalyzes the phosphorylation of ribose 1,5-bisphosphate to 5-phospho-D-ribosyl alpha-1-diphosphate (PRPP). This chain is Ribose 1,5-bisphosphate phosphokinase PhnN, found in Brucella melitensis biotype 2 (strain ATCC 23457).